The sequence spans 1186 residues: Syntaxin-binding protein 5-like (1186 aa).

Met1 bears the N-acetylmethionine mark. A disordered region spans residues 15–40 (ASSPGSGSSSGSNSGGGAGSGSVHPA). Residues 16–26 (SSPGSGSSSGS) are compositionally biased toward low complexity. WD repeat units follow at residues 74–107 (TALA…CYCQ), 114–153 (VLQL…SLKF), 158–194 (ITYC…GYVI), 213–247 (HLSD…ELRV), 253–285 (IHSI…PSRP), 307–349 (PILK…KAIT), 357–391 (IVEF…VVDL), 413–490 (TCTA…YKLK), 518–629 (QMIY…ELVI), and 643–705 (TSLA…IADN). Phosphothreonine is present on Thr568. A phosphoserine mark is found at Ser574, Ser589, and Ser593. Thr596 is subject to Phosphothreonine. Position 599 is a phosphoserine (Ser599). Residue Arg709 is modified to Omega-N-methylarginine. The segment covering 748–769 (TSDHVNGHCTSPTSQSCSSGKR) has biased composition (polar residues). Positions 748–771 (TSDHVNGHCTSPTSQSCSSGKRLS) are disordered. A phosphoserine mark is found at Ser763, Ser765, Ser766, Ser771, Ser772, Ser793, Ser800, Ser812, Ser820, Ser822, and Ser823. WD repeat units follow at residues 832–889 (ITAL…SGTF), 898–969 (TFSC…QTCL), 974–1018 (ITET…LDVN), and 1032–1055 (CFTN…TYSQ). Residue Thr1093 is modified to Phosphothreonine. One can recognise a v-SNARE coiled-coil homology domain in the interval 1121-1181 (SIEGMKGAAG…HELMLKYKDK (61 aa)).

The protein belongs to the WD repeat L(2)GL family. In terms of assembly, interacts with STX1A and STX4. In terms of processing, phosphorylated, leading to STXBP5L increased turnover and subsequent de-repression of insulin secretion. Phosphorylated on serine residues in response to glucose or phorbol esters. Post-translationally, ubiquitinated by the E3 ligase SYVN1, leading to STXBP5L proteasomal degradation. As to expression, detected in kidney, hippocampus and lung carcinoma.

It is found in the cytoplasm. Its subcellular location is the cell membrane. The protein localises to the membrane. Plays a role in vesicle trafficking and exocytosis inhibition. In pancreatic beta-cells, inhibits insulin secretion probably by interacting with and regulating STX1A and STX4, key t-SNARE proteins involved in the fusion of insulin granules to the plasma membrane. Also plays a role in neurotransmitter release by inhibiting basal acetylcholine release from axon terminals and by preventing synaptic fatigue upon repetitive stimulation. Promotes as well axonal outgrowth. In Homo sapiens (Human), this protein is Syntaxin-binding protein 5-like (STXBP5L).